A 1849-amino-acid chain; its full sequence is SH3 and multiple ankyrin repeat domains protein 2 (1849 aa).

A disordered region spans residues methionine 1–isoleucine 33. Residues serine 15–serine 25 show a composition bias toward low complexity. ANK repeat units lie at residues threonine 196–phenylalanine 226, aspartate 230–tyrosine 259, tyrosine 263–cysteine 293, asparagine 297–alanine 326, serine 330–leucine 359, and asparagine 363–proline 393. A disordered region spans residues glutamine 451–proline 493. The SH3 domain maps to valine 526–cysteine 585. In terms of domain architecture, PDZ spans threonine 626–threonine 720. Basic and acidic residues predominate over residues serine 764–glutamate 774. The segment at serine 764 to alanine 808 is disordered. The residue at position 831 (serine 831) is a Phosphoserine. A Phosphothreonine modification is found at threonine 860. The segment at leucine 878–lysine 910 is disordered. Pro residues predominate over residues isoleucine 887–proline 903. A Phosphoserine modification is found at serine 960. Disordered stretches follow at residues leucine 1013–aspartate 1293, leucine 1328–proline 1371, proline 1432–asparagine 1526, and serine 1574–alanine 1594. Positions serine 1040 to serine 1052 are enriched in low complexity. Positions valine 1086–arginine 1097 are enriched in basic and acidic residues. The residue at position 1099 (serine 1099) is a Phosphoserine. The span at glutamate 1128–alanine 1138 shows a compositional bias: acidic residues. 3 stretches are compositionally biased toward low complexity: residues glycine 1159 to glycine 1170, glycine 1181 to glycine 1199, and arginine 1208 to serine 1221. Residues arginine 1274 to aspartate 1293 are compositionally biased toward basic and acidic residues. The residue at position 1278 (threonine 1278) is a Phosphothreonine. An SH3-binding motif is present at residues alanine 1327–glutamate 1333. Positions serine 1343 to glycine 1357 are enriched in low complexity. Positions threonine 1445–alanine 1460 are enriched in polar residues. The segment covering valine 1494–glutamate 1505 has biased composition (basic and acidic residues). The segment covering threonine 1506–glutamate 1522 has biased composition (low complexity). The segment covering isoleucine 1577 to serine 1588 has biased composition (pro residues). Threonine 1667 carries O-linked (GlcNAc) threonine glycosylation. A compositionally biased stretch (polar residues) spans phenylalanine 1678–serine 1692. A disordered region spans residues phenylalanine 1678–lysine 1776. Residues serine 1709 and serine 1713 each carry the phosphoserine modification. Low complexity-rich tracts occupy residues threonine 1721 to serine 1738 and arginine 1760 to serine 1774. The 64-residue stretch at tryptophan 1786–arginine 1849 folds into the SAM domain.

The protein belongs to the SHANK family. As to quaternary structure, is part of a complex with DLG4/PSD-95 and DLGAP1/GKAP. Interacts with CTTN/cortactin SH3 domain, DLGAP1/GKAP and alpha-latrotoxin receptor 1. Interacts with DNM2, DBNL, GRID2, BAIAP2, SLC9A3, PLCB3 and CFTR. Interacts (via proline-rich region) with PDE4D. Interacts with ABI1 (via SH3 domain). In terms of tissue distribution, isoform 3 is present in epithelial colonic cells (at protein level).

The protein resides in the apical cell membrane. The protein localises to the cytoplasm. Its subcellular location is the synapse. It is found in the postsynaptic density. It localises to the cell projection. The protein resides in the growth cone. The protein localises to the dendritic spine. Seems to be an adapter protein in the postsynaptic density (PSD) of excitatory synapses that interconnects receptors of the postsynaptic membrane including NMDA-type and metabotropic glutamate receptors, and the actin-based cytoskeleton. May play a role in the structural and functional organization of the dendritic spine and synaptic junction. The polypeptide is SH3 and multiple ankyrin repeat domains protein 2 (SHANK2) (Homo sapiens (Human)).